The primary structure comprises 152 residues: Transcriptional regulator MraZ (152 aa).

2 consecutive SpoVT-AbrB domains span residues 5 to 52 (VTSI…PLHE) and 81 to 124 (ATEC…QDKQ).

It belongs to the MraZ family. Forms oligomers.

It localises to the cytoplasm. The protein localises to the nucleoid. In Actinobacillus pleuropneumoniae serotype 5b (strain L20), this protein is Transcriptional regulator MraZ.